A 340-amino-acid chain; its full sequence is uncharacterized protein (340 aa).

The segment covering 193 to 207 has biased composition (basic and acidic residues); it reads KELPKEKKKSDGDKT. The segment at 193–340 is disordered; it reads KELPKEKKKS…FIPLQPKKKI (148 aa). The segment covering 217–228 has biased composition (low complexity); it reads FFGFWGHSGSKS. Residues 235 to 244 are compositionally biased toward basic and acidic residues; it reads EKPIEAKNEI. Polar residues-rich tracts occupy residues 263–279 and 307–328; these read SDKN…SDQQ and PAQS…SLTL.

This is an uncharacterized protein from Saccharomyces cerevisiae (strain ATCC 204508 / S288c) (Baker's yeast).